We begin with the raw amino-acid sequence, 351 residues long: UPF0764 protein C16orf89 homolog (351 aa).

The N-terminal stretch at 1-25 (MKSLKMLYPLFMLLVLSSKIDLSNQ) is a signal peptide.

This sequence belongs to the UPF0764 family. In terms of assembly, homodimer.

It is found in the secreted. This is UPF0764 protein C16orf89 homolog from Danio rerio (Zebrafish).